A 153-amino-acid polypeptide reads, in one-letter code: Aspartate carbamoyltransferase regulatory chain (153 aa).

4 residues coordinate Zn(2+): Cys109, Cys114, Cys138, and Cys141.

It belongs to the PyrI family. As to quaternary structure, contains catalytic and regulatory chains. Zn(2+) is required as a cofactor.

Involved in allosteric regulation of aspartate carbamoyltransferase. The chain is Aspartate carbamoyltransferase regulatory chain from Shigella dysenteriae serotype 1 (strain Sd197).